A 753-amino-acid polypeptide reads, in one-letter code: Cytoplasmic polyadenylation element-binding protein 3 (753 aa).

The interval 111-286 is disordered; the sequence is VGESTPSSAG…NGSWHGELPP (176 aa). Composition is skewed to basic and acidic residues over residues 131 to 142 and 175 to 188; these read KPTEKISVDEPP and FGKE…EVVK. Over residues 227–239 the composition is skewed to low complexity; the sequence is SPAKISSNSSSSS. The segment covering 265 to 279 has biased composition (polar residues); that stretch reads SRQGLSNRDNLSNGS. Positions 298-320 constitute an RRM domain; it reads IFVGGVPWDITEAALKDSFGEFG. The interval 567-589 is disordered; the sequence is KAYAGPHRRPHLTSNSLSKSHGC. Polar residues predominate over residues 578–589; it reads LTSNSLSKSHGC.

Cytoplasmic polyadenylation element binding protein that binds to and regulates the translation of specific mRNAs. This is Cytoplasmic polyadenylation element-binding protein 3 (cpb-3) from Caenorhabditis briggsae.